Consider the following 63-residue polypeptide: Large ribosomal subunit protein uL29 (63 aa).

This sequence belongs to the universal ribosomal protein uL29 family.

The sequence is that of Large ribosomal subunit protein uL29 from Shewanella loihica (strain ATCC BAA-1088 / PV-4).